The sequence spans 161 residues: GTP-dependent dephospho-CoA kinase (161 aa).

Residues Asp40, Val41, Val42, Asp59, Glu112, and Glu135 each coordinate GTP.

This sequence belongs to the GTP-dependent DPCK family.

The catalysed reaction is 3'-dephospho-CoA + GTP = GDP + CoA + H(+). Its pathway is cofactor biosynthesis; coenzyme A biosynthesis. Its function is as follows. Catalyzes the GTP-dependent phosphorylation of the 3'-hydroxyl group of dephosphocoenzyme A to form coenzyme A (CoA). This Methanocorpusculum labreanum (strain ATCC 43576 / DSM 4855 / Z) protein is GTP-dependent dephospho-CoA kinase.